The primary structure comprises 346 residues: Isopentenyl-diphosphate delta-isomerase (346 aa).

12–13 (RK) is a binding site for substrate. Residues 67–69 (ALT), serine 97, and asparagine 126 each bind FMN. Residue 97 to 99 (SQR) coordinates substrate. Glutamine 156 lines the substrate pocket. Residue glutamate 157 coordinates Mg(2+). FMN-binding positions include lysine 188, threonine 218, 263 to 265 (GIR), and 284 to 285 (AG).

Belongs to the IPP isomerase type 2 family. Homooctamer. Dimer of tetramers. FMN serves as cofactor. The cofactor is NADPH. Mg(2+) is required as a cofactor.

Its subcellular location is the cytoplasm. The catalysed reaction is isopentenyl diphosphate = dimethylallyl diphosphate. Its function is as follows. Involved in the biosynthesis of isoprenoids. Catalyzes the 1,3-allylic rearrangement of the homoallylic substrate isopentenyl (IPP) to its allylic isomer, dimethylallyl diphosphate (DMAPP). The protein is Isopentenyl-diphosphate delta-isomerase of Moorella thermoacetica (strain ATCC 39073 / JCM 9320).